A 98-amino-acid chain; its full sequence is Feather keratin 1 (98 aa).

It belongs to the avian keratin family. As to quaternary structure, the avian keratins (F-ker, S-ker, C-ker and B-ker) are a complex mixture of very similar polypeptides.

The polypeptide is Feather keratin 1 (Gallus gallus (Chicken)).